The sequence spans 111 residues: MVKIRLNRMGRRHQPFYRIVIVDSRNKRSGKYIESIGYYDPLNNSNQYKVDEDKALDWLLKGAQPTDTARRILRKMGVMKRYDEIKFQARKEKGVKESNEIVEPEGEEVKE.

Positions 92 to 111 are disordered; sequence EKGVKESNEIVEPEGEEVKE. The span at 100 to 111 shows a compositional bias: acidic residues; that stretch reads EIVEPEGEEVKE.

This sequence belongs to the bacterial ribosomal protein bS16 family.

The chain is Small ribosomal subunit protein bS16 from Petrotoga mobilis (strain DSM 10674 / SJ95).